We begin with the raw amino-acid sequence, 238 residues long: Auxin-responsive protein IAA2 (238 aa).

The EAR-like (transcriptional repression) motif lies at 24–28; it reads LCLGL. Composition is skewed to low complexity over residues 33-44, 59-69, and 85-94; these read SSSSSSKPSEGS, ASKPSGAAAAA, and ASSSSSSSKQ. Disordered regions lie at residues 33–69 and 82–114; these read SSSSSSKPSEGSTAAPAFALRSNGTNASKPSGAAAAA and RNLASSSSSSSKQAPPPPSSSPQNGDKASKDGG. The PB1 domain occupies 118 to 216; it reads GMFVKINMDG…TAKRLRVLKS (99 aa). Residues 217–238 are disordered; sequence SDLPPPSLMRAAGSRKRAAADS. Basic residues predominate over residues 229 to 238; it reads GSRKRAAADS.

It belongs to the Aux/IAA family. In terms of assembly, homodimers and heterodimers. Highly expressed in flowers.

The protein localises to the nucleus. In terms of biological role, aux/IAA proteins are short-lived transcriptional factors that function as repressors of early auxin response genes at low auxin concentrations. The protein is Auxin-responsive protein IAA2 (IAA2) of Oryza sativa subsp. japonica (Rice).